Here is a 948-residue protein sequence, read N- to C-terminus: Zinc finger CCCH domain-containing protein 3 (948 aa).

Disordered stretches follow at residues 25–108, 121–219, 265–296, and 336–493; these read HGNA…VPQQ, QNVV…RRTV, VDAG…REAS, and NVCK…LKKT. Residues 56–74 show a composition bias toward basic residues; sequence RPSRRGYSSHHGPSWRKKY. The segment covering 128–141 has biased composition (low complexity); that stretch reads KPPSKSGSASASGA. Over residues 157-166 the composition is skewed to basic and acidic residues; that stretch reads QRPREGEGEP. A compositionally biased stretch (low complexity) spans 372–398; sequence SAPSKYKWKASSPSASSSSSFRWQSEA. A compositionally biased stretch (polar residues) spans 405–415; that stretch reads SQLSPVLSRSP. The residue at position 408 (S408) is a Phosphoserine. Basic residues predominate over residues 441–452; that stretch reads VKSRTKIIRRRS. C3H1-type zinc fingers lie at residues 667-695, 699-722, 723-749, 750-777, and 778-800; these read EKRK…HDPE, VCTR…HHVS, KEKM…HVYV, SRKA…HTLL, and CPDF…HRTQ. Disordered regions lie at residues 798–891 and 913–948; these read RTQK…HEAP and ISLQ…KPRL. The segment covering 834 to 846 has biased composition (polar residues); it reads SASQRPTRQTPSS. 2 stretches are compositionally biased toward low complexity: residues 847 to 856 and 864 to 885; these read AALTAAAVAA and SASP…PPAS. 2 positions are modified to phosphoserine: S918 and S920.

As to quaternary structure, interacts with SMAD1, SMAD3, SMAD4, CPSF2 and CPSF3.

The protein localises to the nucleus. Its function is as follows. Required for the export of polyadenylated mRNAs from the nucleus. Enhances ACVR1B-induced SMAD-dependent transcription. Binds to single-stranded DNA but not to double-stranded DNA in vitro. Involved in RNA cleavage. In Homo sapiens (Human), this protein is Zinc finger CCCH domain-containing protein 3 (ZC3H3).